Reading from the N-terminus, the 415-residue chain is Serine hydroxymethyltransferase (415 aa).

Residues Leu117 and Gly121–Leu123 contribute to the (6S)-5,6,7,8-tetrahydrofolate site. An N6-(pyridoxal phosphate)lysine modification is found at Lys225. Ser349–Phe351 contributes to the (6S)-5,6,7,8-tetrahydrofolate binding site.

The protein belongs to the SHMT family. As to quaternary structure, homodimer. Pyridoxal 5'-phosphate serves as cofactor.

It is found in the cytoplasm. It carries out the reaction (6R)-5,10-methylene-5,6,7,8-tetrahydrofolate + glycine + H2O = (6S)-5,6,7,8-tetrahydrofolate + L-serine. Its pathway is one-carbon metabolism; tetrahydrofolate interconversion. The protein operates within amino-acid biosynthesis; glycine biosynthesis; glycine from L-serine: step 1/1. Its function is as follows. Catalyzes the reversible interconversion of serine and glycine with tetrahydrofolate (THF) serving as the one-carbon carrier. This reaction serves as the major source of one-carbon groups required for the biosynthesis of purines, thymidylate, methionine, and other important biomolecules. Also exhibits THF-independent aldolase activity toward beta-hydroxyamino acids, producing glycine and aldehydes, via a retro-aldol mechanism. The protein is Serine hydroxymethyltransferase of Nitratiruptor sp. (strain SB155-2).